A 314-amino-acid polypeptide reads, in one-letter code: MSSAAPIVCLAGPTAAGKSAATLALAQRWPLEVVNVDSATIYRGMDIGTAKPSPAEQARVPQHLLDIRDPAQSYSAAEFRADALRLIDEIRARGRMPLLAGGTMLYYKALRDGLDDLPQADPALRAELEARAARLGWPALHAELARLDPATAARLAPNDSQRIQRALEICTLSGQPMSALLHGRQRAADATPHRYVTLSLEPSDRAALHARIAQRFDAMLAGGLLDEVRALRARGDLHPGLPSVRCVGYRQMWAHLDGAVDLETAREQAIAATRQLAKRQLTWLRAQPERLVVDCLAGNASGRVVDRVAEILAD.

Position 12–19 (12–19 (GPTAAGKS)) interacts with ATP. Substrate is bound at residue 14–19 (TAAGKS). Interaction with substrate tRNA stretches follow at residues 37–40 (DSAT), 161–165 (QRIQR), and 245–250 (RCVGYR).

It belongs to the IPP transferase family. Monomer. It depends on Mg(2+) as a cofactor.

It carries out the reaction adenosine(37) in tRNA + dimethylallyl diphosphate = N(6)-dimethylallyladenosine(37) in tRNA + diphosphate. Catalyzes the transfer of a dimethylallyl group onto the adenine at position 37 in tRNAs that read codons beginning with uridine, leading to the formation of N6-(dimethylallyl)adenosine (i(6)A). The sequence is that of tRNA dimethylallyltransferase from Bordetella petrii (strain ATCC BAA-461 / DSM 12804 / CCUG 43448).